A 417-amino-acid polypeptide reads, in one-letter code: Carboxypeptidase B (417 aa).

An N-terminal signal peptide occupies residues 1-15 (MLALLVLVTVALASA). A propeptide spans 16 to 110 (HHGGEHFEGE…VEAQFDSRVR (95 aa)) (activation peptide). Residues 118 to 412 (KYNKWETIEA…LAIKYVASYV (295 aa)) form the Peptidase M14 domain. Cysteine 173 and cysteine 186 are joined by a disulfide. Residues histidine 176 and glutamate 179 each contribute to the Zn(2+) site. Substrate is bound by residues 176-179 (HARE), arginine 234, and 251-252 (NR). 2 disulfide bridges follow: cysteine 245–cysteine 268 and cysteine 259–cysteine 273. Histidine 304 provides a ligand contact to Zn(2+). Substrate-binding positions include 305–306 (SY) and tyrosine 356. Residue glutamate 378 is the Proton donor/acceptor of the active site.

The protein belongs to the peptidase M14 family. The cofactor is Zn(2+). Pancreas.

The protein localises to the secreted. The protein resides in the zymogen granule lumen. The enzyme catalyses Preferential release of a C-terminal lysine or arginine amino acid.. This Homo sapiens (Human) protein is Carboxypeptidase B (CPB1).